The chain runs to 101 residues: Small ribosomal subunit protein uS14 (101 aa).

Residues 36–61 (ASAEDRRAARQKLQSLPRNSSPVRQR) form a disordered region. The segment covering 47–59 (KLQSLPRNSSPVR) has biased composition (polar residues).

Belongs to the universal ribosomal protein uS14 family. In terms of assembly, part of the 30S ribosomal subunit. Contacts proteins S3 and S10.

In terms of biological role, binds 16S rRNA, required for the assembly of 30S particles and may also be responsible for determining the conformation of the 16S rRNA at the A site. In Methylobacillus flagellatus (strain ATCC 51484 / DSM 6875 / VKM B-1610 / KT), this protein is Small ribosomal subunit protein uS14.